A 438-amino-acid chain; its full sequence is MSENKAHITVNNKKIELSVRKGTLGPGVIEIASLYKETDTFTYDPGFTSTASCESKITYIDGDKGILLYCGYPIDQLAEKGDFLESCYLLLYGELPTKQEKIDFDRCIMQHMMVHEQFTRFFHGFRRDSHPMAVMVACLGAMSAFYHDSIDIKDAQQRMIAAIRLISKVPTLAAMAYKYSIGQAFVYPRNDLSYAANFLHMCFSVPCEEYKINPVLSRAMDRIFTLHADHEQNASTSTVRLVGSSGANPFACIAAGVACLWGPAHGGANEACLKMLQKIGSVERIPEFIARAKDKNDPFRLMGFGHRVYKNYDPRAKIMQQTCHEVLKELNIQDDPLLDIAIALENTALNDEYFIEKKLYPNVDFYSGITLKALGFPTEMFTVLFALARSIGWVAQWKEMIEDPAQKIGRPRQLYTGYAAREYVSIDKRISKNKMTTQ.

Active-site residues include histidine 306 and aspartate 364.

Belongs to the citrate synthase family.

It carries out the reaction oxaloacetate + acetyl-CoA + H2O = citrate + CoA + H(+). The protein operates within carbohydrate metabolism; tricarboxylic acid cycle; isocitrate from oxaloacetate: step 1/2. The sequence is that of Citrate synthase (gltA) from Bartonella quintana (strain Toulouse) (Rochalimaea quintana).